A 140-amino-acid chain; its full sequence is Baculoviral IAP repeat-containing protein 5 (140 aa).

Residues Arg18 to Thr88 form a BIR repeat. Lys23 is modified (N6-acetyllysine). Thr34 carries the post-translational modification Phosphothreonine; by CDK1 and CDK15. The residue at position 48 (Thr48) is a Phosphothreonine. Zn(2+)-binding residues include Cys57, Cys60, Glu76, His77, His80, and Cys84. Lys90, Lys110, Lys112, and Lys115 each carry N6-acetyllysine. The span at Ile113 to Lys129 shows a compositional bias: basic and acidic residues. The tract at residues Ile113 to Ala140 is disordered. The residue at position 117 (Thr117) is a Phosphothreonine; by AURKB. Lys129 carries the post-translational modification N6-acetyllysine. The span at Thr130–Ala140 shows a compositional bias: polar residues.

This sequence belongs to the IAP family. In terms of assembly, monomer or homodimer. Exists as a homodimer in the apo state and as a monomer in the CPC-bound state. The monomer protects cells against apoptosis more efficiently than the dimer. Only the dimeric form is capable of enhancing tubulin stability in cells. When phosphorylated, interacts with LAMTOR5/HBXIP; the resulting complex binds pro-CASP9, as well as active CASP9, but much less efficiently. Component of the chromosomal passenger complex (CPC) composed of at least BIRC5/survivin, CDCA8/borealin, INCENP, AURKB or AURKC; in the complex forms a triple-helix bundle-based subcomplex with INCENP and CDCA8. Interacts with JTB. Interacts (via BIR domain) with histone H3 phosphorylated at 'Thr-3' (H3pT3). Interacts with EVI5. Interacts with GTP-bound RAN in both the S and M phases of the cell cycle. Interacts with USP9X. Interacts with tubulin. Interacts with BIRC2/c-IAP1. The acetylated form at Lys-129 interacts with STAT3. The monomeric form deacetylated at Lys-129 interacts with XPO1/CRM1. The monomeric form interacts with XIAP/BIRC4. Both the dimeric and monomeric form can interact with DIABLO/SMAC. Interacts with BIRC6/bruce. Interacts with FBXL7; this interaction facilitates the polyubiquitination and subsequent proteasomal degradation of BIRC5 by the SCF(FBXL7) E3 ubiquitin-protein ligase complex. Ubiquitinated by the Cul9-RING ubiquitin-protein ligase complex, leading to its degradation. Ubiquitination is required for centrosomal targeting. Deubiquitinated by USP35 or USP38; leading to stabilization. In terms of processing, acetylation at Lys-129 results in its homodimerization, while deacetylation promotes the formation of monomers which heterodimerize with XPO1/CRM1 which facilitates its nuclear export. The acetylated form represses STAT3 transactivation. The dynamic equilibrium between its acetylation and deacetylation at Lys-129 determines its interaction with XPO1/CRM1, its subsequent subcellular localization, and its ability to inhibit STAT3 transactivation. Post-translationally, in vitro phosphorylation at Thr-117 by AURKB prevents interaction with INCENP and localization to mitotic chromosomes. Phosphorylation at Thr-48 by CK2 is critical for its mitotic and anti-apoptotic activities. Phosphorylation at Thr-34 by CDK15 is critical for its anti-apoptotic activity.

It is found in the cytoplasm. Its subcellular location is the nucleus. It localises to the chromosome. The protein localises to the centromere. The protein resides in the cytoskeleton. It is found in the spindle. Its subcellular location is the kinetochore. It localises to the midbody. Functionally, multitasking protein that has dual roles in promoting cell proliferation and preventing apoptosis. Component of a chromosome passage protein complex (CPC) which is essential for chromosome alignment and segregation during mitosis and cytokinesis. Acts as an important regulator of the localization of this complex; directs CPC movement to different locations from the inner centromere during prometaphase to midbody during cytokinesis and participates in the organization of the center spindle by associating with polymerized microtubules. Involved in the recruitment of CPC to centromeres during early mitosis via association with histone H3 phosphorylated at 'Thr-3' (H3pT3) during mitosis. The complex with RAN plays a role in mitotic spindle formation by serving as a physical scaffold to help deliver the RAN effector molecule TPX2 to microtubules. May counteract a default induction of apoptosis in G2/M phase. The acetylated form represses STAT3 transactivation of target gene promoters. May play a role in neoplasia. Inhibitor of CASP3 and CASP7. Essential for the maintenance of mitochondrial integrity and function. This chain is Baculoviral IAP repeat-containing protein 5 (Birc5), found in Mus musculus (Mouse).